The following is a 292-amino-acid chain: uncharacterized protein (292 aa).

Residues 66–86 (LFFYLLFWWTYLTIVVLLTVP) form a helical membrane-spanning segment.

The protein resides in the host membrane. This is an uncharacterized protein from Alcelaphine herpesvirus 1 (strain C500) (AlHV-1).